A 125-amino-acid polypeptide reads, in one-letter code: Glycine cleavage system H protein (125 aa).

The region spanning 22 to 104 (VATVGITIHA…EGEGWLFKLK (83 aa)) is the Lipoyl-binding domain. An N6-lipoyllysine modification is found at K63.

It belongs to the GcvH family. The glycine cleavage system is composed of four proteins: P, T, L and H. (R)-lipoate serves as cofactor.

Its function is as follows. The glycine cleavage system catalyzes the degradation of glycine. The H protein shuttles the methylamine group of glycine from the P protein to the T protein. This chain is Glycine cleavage system H protein, found in Brucella abortus (strain 2308).